Reading from the N-terminus, the 226-residue chain is Triosephosphate isomerase (226 aa).

H91 serves as the catalytic Electrophile. The Proton acceptor role is filled by E163. Residues G169 and S207 each contribute to the substrate site.

The protein belongs to the triosephosphate isomerase family. As to quaternary structure, homodimer.

Its subcellular location is the cytoplasm. The catalysed reaction is D-glyceraldehyde 3-phosphate = dihydroxyacetone phosphate. It functions in the pathway carbohydrate biosynthesis; gluconeogenesis. Its pathway is carbohydrate degradation; glycolysis; D-glyceraldehyde 3-phosphate from glycerone phosphate: step 1/1. Involved in the gluconeogenesis. Catalyzes stereospecifically the conversion of dihydroxyacetone phosphate (DHAP) to D-glyceraldehyde-3-phosphate (G3P). This Rhizobium etli (strain ATCC 51251 / DSM 11541 / JCM 21823 / NBRC 15573 / CFN 42) protein is Triosephosphate isomerase.